Consider the following 784-residue polypeptide: Copal-8-ol diphosphate hydratase TPSSA9, chloroplastic (784 aa).

Position 240 (R240) interacts with substrate. Residues D372 and D374 each contribute to the Mg(2+) site. A DXDD motif motif is present at residues 372–375 (DIDD). Residue R459 participates in substrate binding.

The protein belongs to the terpene synthase family.

Its subcellular location is the plastid. It localises to the chloroplast. The catalysed reaction is (2E,6E,10E)-geranylgeranyl diphosphate + H2O = 8-hydroxycopalyl diphosphate. Its pathway is secondary metabolite biosynthesis; terpenoid biosynthesis. Its function is as follows. Involved in the biosynthesis of labdane-type diterpenoid including sclareol, a diterpene-diol that is used as fragrance and flavoring, and has anticancer effects (able to kill leukemic and colon cancer cells by apoptosis). Sclareol can also be used as synthesis precursor of ambergris substitution fragance products such as ambrox. Terpene synthase that produces 8-hydroxycopalyl diphosphate from geranylgeranyl diphosphate (GGPP). The polypeptide is Copal-8-ol diphosphate hydratase TPSSA9, chloroplastic (Salvia sclarea (Clary sage)).